Here is a 471-residue protein sequence, read N- to C-terminus: BRISC complex subunit FAM175B (471 aa).

One can recognise an MPN domain in the interval 7 to 161 (LVTISGAALS…THKFRHVFLR (155 aa)). Positions 245 to 272 (ESDLEVAELEKQVHELKIKIATQQLAKR) form a coiled coil. Residues 343-445 (AEKSRRAGRS…FSDAECPISS (103 aa)) form a disordered region. Residues 359 to 370 (NQQQETQNFFTN) show a composition bias toward low complexity.

Belongs to the FAM175 family. Abro1 subfamily. Component of the BRISC complex, at least composed of FAM175B/ABRO1, BRCC3/BRCC36, BABAM2 and BABAM1/NBA1. Within the complex, interacts directly with BRCC3/BRCC36. The heterodimer with BRCC3/BRCC36 assembles into a heterotetramer. The BRISC complex binds polyubiquitin.

The protein localises to the cytoplasm. The protein resides in the nucleus. It is found in the cytoskeleton. Its subcellular location is the spindle pole. Its function is as follows. Component of the BRISC complex that specifically cleaves 'Lys-63'-linked polyubiquitin, leaving the last ubiquitin chain attached to its substrates. Does not have activity by itself, but the catalytic subunit BRCC3/BRCC36 needs to be associated into a heterotetramer with FAM175B for minimal in vitro activity. May act as a central scaffold protein that assembles the various components of the BRISC complex and retains them in the cytoplasm. Plays a role in regulating the onset of apoptosis via its role in modulating 'Lys-63'-linked ubiquitination of target proteins. Required for normal mitotic spindle assembly and microtubule attachment to kinetochores via its role in deubiquitinating numa1. The protein is BRISC complex subunit FAM175B of Camponotus floridanus (Florida carpenter ant).